Here is a 548-residue protein sequence, read N- to C-terminus: Sesquiterpene synthase TPS1 (548 aa).

Positions 264, 301, 305, 442, and 445 each coordinate (2E,6E)-farnesyl diphosphate. Positions 301 and 305 each coordinate Mg(2+). Residues 301-305 carry the DDXXD motif motif; sequence DDTYD. The Mg(2+) site is built by Asp-445 and Glu-453.

The protein belongs to the terpene synthase family. Tpsa subfamily. Monomer. Mg(2+) serves as cofactor. Expressed in leaves and stems.

The protein localises to the cytoplasm. It catalyses the reaction (2E,6E)-farnesyl diphosphate = germacrene D + diphosphate. It carries out the reaction (2E,6E)-farnesyl diphosphate = (-)-(E)-beta-caryophyllene + diphosphate. The enzyme catalyses (2E,6E)-farnesyl diphosphate = beta-copaene + diphosphate. It functions in the pathway secondary metabolite biosynthesis; terpenoid biosynthesis. In terms of biological role, sesquiterpene synthase involved in the biosynthesis of volatile compounds. Mediates the conversion of (2E,6E)-farnesyl diphosphate (FPP) into germacrene D, (-)-(E)-beta-caryophyllene and beta-copaene. The polypeptide is Sesquiterpene synthase TPS1 (Xanthium strumarium (Rough cocklebur)).